The chain runs to 245 residues: Polyhedrin (245 aa).

It belongs to the polyhedrin family.

Major component of the virus occlusion bodies, which are large proteinaceous structures (polyhedra), that protect the virus from the outside environment for extended periods until they are ingested by insect larvae. In Orgyia pseudotsugata multicapsid polyhedrosis virus (OpMNPV), this protein is Polyhedrin (PH).